A 485-amino-acid polypeptide reads, in one-letter code: Heat stress transcription factor A-1d (485 aa).

2 disordered regions span residues Met1–Ala34 and Arg126–Ser149. A DNA-binding region spans residues Pro35–Pro129. Positions Gly136–Gln146 are enriched in low complexity. The hydrophobic repeat HR-A/B stretch occupies residues Ala152–Val218. Disordered stretches follow at residues Gln229–Val269 and Pro436–Lys461. The Bipartite nuclear localization signal signature appears at Asn238–Arg252. Residues Met441–Asn455 are compositionally biased toward polar residues. The short motif at Leu472–Leu480 is the Nuclear export signal element.

This sequence belongs to the HSF family. Class A subfamily. Homotrimer. Interacts with HSP90-2. Exhibits temperature-dependent phosphorylation.

Its subcellular location is the cytoplasm. It localises to the nucleus. In terms of biological role, transcriptional regulator that specifically binds DNA sequence 5'-AGAAnnTTCT-3' known as heat shock promoter elements (HSE). The polypeptide is Heat stress transcription factor A-1d (HSFA1D) (Arabidopsis thaliana (Mouse-ear cress)).